We begin with the raw amino-acid sequence, 572 residues long: RNA polymerase sigma factor sigB (572 aa).

The N-terminal 39 residues, 1–39, are a transit peptide targeting the chloroplast; it reads MSSCLLPQFKCPPDSFSIHFRTSFCAPKHNKGSVFFQPQ. A disordered region spans residues 215–249; that stretch reads TRQTERKARRAKGLEKTASGIPSVKTGSSPKKKRL. The Polymerase core binding signature appears at 360–373; the sequence is DLVQEGCRGLVRGA. A DNA-binding region (H-T-H motif) is located at residues 530–549; sequence LQEIGEMMGVSRERVRQIES.

Belongs to the sigma-70 factor family. As to expression, highly expressed in cotyledons, to a lesser extent in leaves, sepals and siliques, and barely expressed in roots. Present in seedlings.

It is found in the plastid. The protein localises to the chloroplast. Required for the transition of plastids into chloroplasts by coordinating nuclear and chloroplastic genomes under light conditions. Sigma factors are initiation factors that promote the attachment of plastid-encoded RNA polymerase (PEP) to specific initiation sites and are then released. Promotes the biosynthesis of plastid-encoded tRNAs (e.g. trnE-UUC and trnV-UAC). This is RNA polymerase sigma factor sigB (SIGB) from Arabidopsis thaliana (Mouse-ear cress).